The chain runs to 949 residues: Isoleucine--tRNA ligase (949 aa).

The short motif at 58-68 is the 'HIGH' region element; the sequence is PYANGDIHIGH. E567 provides a ligand contact to L-isoleucyl-5'-AMP. The short motif at 608–612 is the 'KMSKS' region element; that stretch reads KMSKS. Residue K611 participates in ATP binding. 4 residues coordinate Zn(2+): C912, C915, C932, and C935.

It belongs to the class-I aminoacyl-tRNA synthetase family. IleS type 1 subfamily. Monomer. Zn(2+) serves as cofactor.

The protein resides in the cytoplasm. It carries out the reaction tRNA(Ile) + L-isoleucine + ATP = L-isoleucyl-tRNA(Ile) + AMP + diphosphate. In terms of biological role, catalyzes the attachment of isoleucine to tRNA(Ile). As IleRS can inadvertently accommodate and process structurally similar amino acids such as valine, to avoid such errors it has two additional distinct tRNA(Ile)-dependent editing activities. One activity is designated as 'pretransfer' editing and involves the hydrolysis of activated Val-AMP. The other activity is designated 'posttransfer' editing and involves deacylation of mischarged Val-tRNA(Ile). This is Isoleucine--tRNA ligase from Vibrio cholerae serotype O1 (strain ATCC 39315 / El Tor Inaba N16961).